A 443-amino-acid polypeptide reads, in one-letter code: UDP-N-acetylmuramate--L-alanine ligase (443 aa).

Residue 110-116 participates in ATP binding; sequence GAHGKTS.

Belongs to the MurCDEF family.

It is found in the cytoplasm. It carries out the reaction UDP-N-acetyl-alpha-D-muramate + L-alanine + ATP = UDP-N-acetyl-alpha-D-muramoyl-L-alanine + ADP + phosphate + H(+). It participates in cell wall biogenesis; peptidoglycan biosynthesis. Its function is as follows. Cell wall formation. The polypeptide is UDP-N-acetylmuramate--L-alanine ligase (Streptococcus agalactiae serotype V (strain ATCC BAA-611 / 2603 V/R)).